The chain runs to 566 residues: Transcription factor atf1 (566 aa).

Residues 1 to 42 (MSPSPVNTSTEPASVAAVSNGNATASSTQVPENNQSDSFAPP) are compositionally biased toward polar residues. 4 disordered regions span residues 1-83 (MSPS…FVGS), 96-117 (SFGS…PSLS), 315-345 (QQQT…PQAS), and 357-479 (SQQF…KSFL). The span at 43–53 (SNNSQQNQQSS) shows a compositional bias: low complexity. Composition is skewed to polar residues over residues 65 to 76 (ANANPADQSDGV) and 97 to 106 (FGSTASVGQG). Over residues 107–117 (NPSLNRNPSLS) the composition is skewed to low complexity. Polar residues-rich tracts occupy residues 379-412 (TLRQ…TANS) and 421-460 (TDYS…YSKG). A compositionally biased stretch (basic and acidic residues) spans 466-479 (SKNETDEEKRKSFL). One can recognise a bZIP domain in the interval 472 to 535 (EEKRKSFLER…VSLKTLLIAH (64 aa)). The tract at residues 474-503 (KRKSFLERNRQAALKCRQRKKQWLSNLQAK) is basic motif. Residues 514–528 (LSAQVSALREEIVSL) form a leucine-zipper region.

It belongs to the bZIP family. As to quaternary structure, heterodimer of pcr1/mts2 and atf1/mts1. In terms of processing, phosphorylated by sty1/spc1.

Its subcellular location is the nucleus. Functionally, transcription factor required for sexual development and entry into stationary phase. Binds and activates CRE sites (cAMP-response elements, also known as M26 meiotic recombination hotspots). The protein is Transcription factor atf1 (atf1) of Schizosaccharomyces pombe (strain 972 / ATCC 24843) (Fission yeast).